The following is a 138-amino-acid chain: Putative nickel-responsive regulator (138 aa).

H78, H89, H91, and C97 together coordinate Ni(2+).

Belongs to the transcriptional regulatory CopG/NikR family. Ni(2+) serves as cofactor.

In terms of biological role, transcriptional regulator. The sequence is that of Putative nickel-responsive regulator from Pyrococcus abyssi (strain GE5 / Orsay).